Reading from the N-terminus, the 261-residue chain is Cytochrome c oxidase subunit 3 (261 aa).

Residues 1 to 15 are Mitochondrial matrix-facing; the sequence is MTHQLHQYHLVDPSP. Residues 16-34 form a helical membrane-spanning segment; it reads WPLTGAMGSLLLASGLAVW. Residues 35–40 lie on the Mitochondrial intermembrane side of the membrane; that stretch reads FHTNNT. A helical membrane pass occupies residues 41 to 66; that stretch reads MLLKFGLLTLLLTMFQWWRDIIREST. The Mitochondrial matrix portion of the chain corresponds to 67–72; it reads YQGHHT. A helical transmembrane segment spans residues 73-105; that stretch reads SGVQKNMRYGMILFITSEVFFFLGFFWALYHVS. At 106 to 128 the chain is on the mitochondrial intermembrane side; that stretch reads LVPTPELGAEWPPIGITPLNPME. Residues 129 to 152 form a helical membrane-spanning segment; that stretch reads VPLLNTAVLLSSGATITWSHHTMM. Topologically, residues 153 to 155 are mitochondrial matrix; sequence KGN. A helical transmembrane segment spans residues 156–183; the sequence is KKEATHALMLTIILGAYFTALQLSEYME. Topologically, residues 184 to 190 are mitochondrial intermembrane; that stretch reads TPFTIAD. A helical transmembrane segment spans residues 191–223; that stretch reads SVYGSLFFVATGFHGLHVMIGTSFLMVCALRLA. Topologically, residues 224–232 are mitochondrial matrix; that stretch reads KHHFTITHH. The helical transmembrane segment at 233–256 threads the bilayer; that stretch reads FGYEAAIWYWHFVDIVWLFLYISV. Residues 257 to 261 are Mitochondrial intermembrane-facing; the sequence is YWWGS.

Belongs to the cytochrome c oxidase subunit 3 family. Component of the cytochrome c oxidase (complex IV, CIV), a multisubunit enzyme composed of 14 subunits. The complex is composed of a catalytic core of 3 subunits MT-CO1, MT-CO2 and MT-CO3, encoded in the mitochondrial DNA, and 11 supernumerary subunits COX4I, COX5A, COX5B, COX6A, COX6B, COX6C, COX7A, COX7B, COX7C, COX8 and NDUFA4, which are encoded in the nuclear genome. The complex exists as a monomer or a dimer and forms supercomplexes (SCs) in the inner mitochondrial membrane with NADH-ubiquinone oxidoreductase (complex I, CI) and ubiquinol-cytochrome c oxidoreductase (cytochrome b-c1 complex, complex III, CIII), resulting in different assemblies (supercomplex SCI(1)III(2)IV(1) and megacomplex MCI(2)III(2)IV(2)).

The protein localises to the mitochondrion inner membrane. It catalyses the reaction 4 Fe(II)-[cytochrome c] + O2 + 8 H(+)(in) = 4 Fe(III)-[cytochrome c] + 2 H2O + 4 H(+)(out). Its function is as follows. Component of the cytochrome c oxidase, the last enzyme in the mitochondrial electron transport chain which drives oxidative phosphorylation. The respiratory chain contains 3 multisubunit complexes succinate dehydrogenase (complex II, CII), ubiquinol-cytochrome c oxidoreductase (cytochrome b-c1 complex, complex III, CIII) and cytochrome c oxidase (complex IV, CIV), that cooperate to transfer electrons derived from NADH and succinate to molecular oxygen, creating an electrochemical gradient over the inner membrane that drives transmembrane transport and the ATP synthase. Cytochrome c oxidase is the component of the respiratory chain that catalyzes the reduction of oxygen to water. Electrons originating from reduced cytochrome c in the intermembrane space (IMS) are transferred via the dinuclear copper A center (CU(A)) of subunit 2 and heme A of subunit 1 to the active site in subunit 1, a binuclear center (BNC) formed by heme A3 and copper B (CU(B)). The BNC reduces molecular oxygen to 2 water molecules using 4 electrons from cytochrome c in the IMS and 4 protons from the mitochondrial matrix. This is Cytochrome c oxidase subunit 3 (MT-CO3) from Lycodon semicarinatus (Ryukyu odd-tooth snake).